We begin with the raw amino-acid sequence, 226 residues long: NAD(P)H-quinone oxidoreductase subunit K, chloroplastic (226 aa).

Positions 43, 44, 108, and 139 each coordinate [4Fe-4S] cluster.

This sequence belongs to the complex I 20 kDa subunit family. As to quaternary structure, NDH is composed of at least 16 different subunits, 5 of which are encoded in the nucleus. It depends on [4Fe-4S] cluster as a cofactor.

Its subcellular location is the plastid. It localises to the chloroplast thylakoid membrane. The enzyme catalyses a plastoquinone + NADH + (n+1) H(+)(in) = a plastoquinol + NAD(+) + n H(+)(out). It catalyses the reaction a plastoquinone + NADPH + (n+1) H(+)(in) = a plastoquinol + NADP(+) + n H(+)(out). NDH shuttles electrons from NAD(P)H:plastoquinone, via FMN and iron-sulfur (Fe-S) centers, to quinones in the photosynthetic chain and possibly in a chloroplast respiratory chain. The immediate electron acceptor for the enzyme in this species is believed to be plastoquinone. Couples the redox reaction to proton translocation, and thus conserves the redox energy in a proton gradient. This is NAD(P)H-quinone oxidoreductase subunit K, chloroplastic from Lupinus luteus (European yellow lupine).